Reading from the N-terminus, the 372-residue chain is NAD(P)H-quinone oxidoreductase subunit 1 (372 aa).

8 helical membrane passes run 27 to 47, 97 to 117, 128 to 148, 166 to 186, 204 to 224, 266 to 286, 308 to 328, and 347 to 367; these read MLWLPFPMLLVLVAAVVGVLV, ILFTLGPVLVVVPVILSWLIV, VGVGIFLWISLSSVQPIGLLM, AAQSISYEIPLALAVLAVVMM, VLSWNIWRQPVGFLIFWICAL, VLSALLVSILYLGGWGFPIPV, TVGIVMTVLKAYLLVFIAILL, and FLLPLALVNLLVTAALKLAFP.

It belongs to the complex I subunit 1 family. NDH-1 is composed of at least 11 different subunits.

It localises to the cellular thylakoid membrane. It catalyses the reaction a plastoquinone + NADH + (n+1) H(+)(in) = a plastoquinol + NAD(+) + n H(+)(out). The enzyme catalyses a plastoquinone + NADPH + (n+1) H(+)(in) = a plastoquinol + NADP(+) + n H(+)(out). NDH-1 shuttles electrons from an unknown electron donor, via FMN and iron-sulfur (Fe-S) centers, to quinones in the respiratory and/or the photosynthetic chain. The immediate electron acceptor for the enzyme in this species is believed to be plastoquinone. Couples the redox reaction to proton translocation, and thus conserves the redox energy in a proton gradient. The polypeptide is NAD(P)H-quinone oxidoreductase subunit 1 (Synechococcus sp. (strain CC9311)).